Consider the following 495-residue polypeptide: UDP-glycosyltransferase 73C5 (495 aa).

Residues 146-162 (ILFHGMGCFCLLCMHVL) traverse the membrane as a helical segment. UDP-alpha-D-glucose-binding positions include Ser-296, 356–358 (SPQ), 373–381 (HCGWNSTLE), and 395–398 (FADQ). Residues 446–477 (MGESDDAKERRRRAKELGDSAHKAVEEGGSSH) form a disordered region. Over residues 450-471 (DDAKERRRRAKELGDSAHKAVE) the composition is skewed to basic and acidic residues.

It belongs to the UDP-glycosyltransferase family. Elongating hypocotyls and root-specific. Expressed in the vascular system, in meristematic tissues of the root tip, and in the vasculature of the hypocotyl right after germination. In late stage of flower development, expressed in petals, and in abscission zones.

The protein resides in the membrane. Its function is as follows. Specifically catalyzes 23-O-glucosylation of brassinosteroids, resulting probably in their inactivation. Also, involved in the O-glucosylation of trans-zeatin and dihydrozeatin. Active in vitro on cis-zeatin, dihydrozeatin-9-N-Glc, and olomoucine. Also involved in the detoxification of the Fusarium mycotoxin deoxynivalenol by the transfer of glucose from UDP-glucose to the hydroxyl group at C-3. Possesses low quercetin 7-O-glucosyltransferase and 4'-O-glucosyltransferase activities in vitro. The sequence is that of UDP-glycosyltransferase 73C5 (UGT73C5) from Arabidopsis thaliana (Mouse-ear cress).